The primary structure comprises 396 residues: ATP synthase subunit beta, chloroplastic (396 aa).

74 to 81 lines the ATP pocket; the sequence is GGAGVGKT.

It belongs to the ATPase alpha/beta chains family. In terms of assembly, F-type ATPases have 2 components, CF(1) - the catalytic core - and CF(0) - the membrane proton channel. CF(1) has five subunits: alpha(3), beta(3), gamma(1), delta(1), epsilon(1). CF(0) has four main subunits: a(1), b(1), b'(1) and c(9-12).

The protein localises to the plastid. The protein resides in the chloroplast thylakoid membrane. The enzyme catalyses ATP + H2O + 4 H(+)(in) = ADP + phosphate + 5 H(+)(out). Functionally, produces ATP from ADP in the presence of a proton gradient across the membrane. The catalytic sites are hosted primarily by the beta subunits. In Adiantum raddianum (Maidenhair fern), this protein is ATP synthase subunit beta, chloroplastic.